Consider the following 252-residue polypeptide: Ubiquinone biosynthesis O-methyltransferase (252 aa).

Arg41, Gly72, Asp93, and Met136 together coordinate S-adenosyl-L-methionine.

This sequence belongs to the methyltransferase superfamily. UbiG/COQ3 family.

The catalysed reaction is a 3-demethylubiquinol + S-adenosyl-L-methionine = a ubiquinol + S-adenosyl-L-homocysteine + H(+). It carries out the reaction a 3-(all-trans-polyprenyl)benzene-1,2-diol + S-adenosyl-L-methionine = a 2-methoxy-6-(all-trans-polyprenyl)phenol + S-adenosyl-L-homocysteine + H(+). It participates in cofactor biosynthesis; ubiquinone biosynthesis. Functionally, O-methyltransferase that catalyzes the 2 O-methylation steps in the ubiquinone biosynthetic pathway. The chain is Ubiquinone biosynthesis O-methyltransferase from Rhizobium leguminosarum bv. trifolii (strain WSM2304).